Consider the following 214-residue polypeptide: GTP-binding nuclear protein GSP1/Ran (214 aa).

One can recognise a Small GTPase Ran-type domain in the interval 4-168 (EVAAFKLVLV…LWLARKLAGN (165 aa)). Position 15 to 22 (15 to 22 (DGGTGKTT)) interacts with GTP. The interval 34 to 42 (NRYNATLGV) is switch-I. Residues Gly65, 119-122 (NKVD), and 147-149 (SAK) each bind GTP. Residues 65-81 (GQEKFGGLRDGYYINGQ) form a switch-II region.

The protein belongs to the small GTPase superfamily. Ran family. In terms of assembly, found in a nuclear export complex with RanGTP, exportin and pre-miRNA.

The protein localises to the nucleus. Its function is as follows. GTP-binding protein involved in nucleocytoplasmic transport. Required for the import of protein into the nucleus and also for RNA export. Involved in chromatin condensation and control of cell cycle. This is GTP-binding nuclear protein GSP1/Ran (GSP1) from Yarrowia lipolytica (strain CLIB 122 / E 150) (Yeast).